Consider the following 220-residue polypeptide: GTP cyclohydrolase 1 (220 aa).

Zn(2+)-binding residues include C110, H113, and C181.

Belongs to the GTP cyclohydrolase I family. As to quaternary structure, toroid-shaped homodecamer, composed of two pentamers of five dimers.

It catalyses the reaction GTP + H2O = 7,8-dihydroneopterin 3'-triphosphate + formate + H(+). The protein operates within cofactor biosynthesis; 7,8-dihydroneopterin triphosphate biosynthesis; 7,8-dihydroneopterin triphosphate from GTP: step 1/1. The chain is GTP cyclohydrolase 1 from Baumannia cicadellinicola subsp. Homalodisca coagulata.